A 236-amino-acid chain; its full sequence is Leucyl/phenylalanyl-tRNA--protein transferase (236 aa).

The protein belongs to the L/F-transferase family.

It localises to the cytoplasm. It catalyses the reaction N-terminal L-lysyl-[protein] + L-leucyl-tRNA(Leu) = N-terminal L-leucyl-L-lysyl-[protein] + tRNA(Leu) + H(+). The catalysed reaction is N-terminal L-arginyl-[protein] + L-leucyl-tRNA(Leu) = N-terminal L-leucyl-L-arginyl-[protein] + tRNA(Leu) + H(+). The enzyme catalyses L-phenylalanyl-tRNA(Phe) + an N-terminal L-alpha-aminoacyl-[protein] = an N-terminal L-phenylalanyl-L-alpha-aminoacyl-[protein] + tRNA(Phe). Functionally, functions in the N-end rule pathway of protein degradation where it conjugates Leu, Phe and, less efficiently, Met from aminoacyl-tRNAs to the N-termini of proteins containing an N-terminal arginine or lysine. The sequence is that of Leucyl/phenylalanyl-tRNA--protein transferase from Nitrosomonas europaea (strain ATCC 19718 / CIP 103999 / KCTC 2705 / NBRC 14298).